We begin with the raw amino-acid sequence, 103 residues long: Histone H4 (103 aa).

Residues 1-14 (MSGRGKGGKGLGKG) show a composition bias toward gly residues. The interval 1–20 (MSGRGKGGKGLGKGGAKRHR) is disordered. A DNA-binding region spans residues 17 to 21 (KRHRK).

This sequence belongs to the histone H4 family. The nucleosome is a histone octamer containing two molecules each of H2A, H2B, H3 and H4 assembled in one H3-H4 heterotetramer and two H2A-H2B heterodimers. The octamer wraps approximately 147 bp of DNA.

It localises to the nucleus. The protein localises to the chromosome. Core component of nucleosome. Nucleosomes wrap and compact DNA into chromatin, limiting DNA accessibility to the cellular machineries which require DNA as a template. Histones thereby play a central role in transcription regulation, DNA repair, DNA replication and chromosomal stability. DNA accessibility is regulated via a complex set of post-translational modifications of histones, also called histone code, and nucleosome remodeling. The chain is Histone H4 (H4-I) from Chlamydomonas reinhardtii (Chlamydomonas smithii).